Here is a 494-residue protein sequence, read N- to C-terminus: Amidophosphoribosyltransferase (494 aa).

The propeptide occupies 1–10 (MFNYSGLNEE). C11 functions as the Nucleophile in the catalytic mechanism. The Glutamine amidotransferase type-2 domain occupies 11–231 (CGVFGIWNHP…AGEYVVINDK (221 aa)). Residues S294, D356, and D357 each contribute to the Mg(2+) site.

In the C-terminal section; belongs to the purine/pyrimidine phosphoribosyltransferase family. It depends on Mg(2+) as a cofactor.

It catalyses the reaction 5-phospho-beta-D-ribosylamine + L-glutamate + diphosphate = 5-phospho-alpha-D-ribose 1-diphosphate + L-glutamine + H2O. Its pathway is purine metabolism; IMP biosynthesis via de novo pathway; N(1)-(5-phospho-D-ribosyl)glycinamide from 5-phospho-alpha-D-ribose 1-diphosphate: step 1/2. Its function is as follows. Catalyzes the formation of phosphoribosylamine from phosphoribosylpyrophosphate (PRPP) and glutamine. In Staphylococcus aureus (strain COL), this protein is Amidophosphoribosyltransferase.